A 326-amino-acid chain; its full sequence is Tagatose 1,6-diphosphate aldolase (326 aa).

It belongs to the aldolase LacD family.

It catalyses the reaction D-tagatofuranose 1,6-bisphosphate = D-glyceraldehyde 3-phosphate + dihydroxyacetone phosphate. Its pathway is carbohydrate metabolism; D-tagatose 6-phosphate degradation; D-glyceraldehyde 3-phosphate and glycerone phosphate from D-tagatose 6-phosphate: step 2/2. This is Tagatose 1,6-diphosphate aldolase from Staphylococcus aureus (strain MSSA476).